Consider the following 300-residue polypeptide: 4-hydroxy-tetrahydrodipicolinate synthase (300 aa).

T55 is a pyruvate binding site. The Proton donor/acceptor role is filled by Y143. The active-site Schiff-base intermediate with substrate is the K171. Pyruvate is bound at residue I211.

The protein belongs to the DapA family. Homotetramer; dimer of dimers.

Its subcellular location is the cytoplasm. The catalysed reaction is L-aspartate 4-semialdehyde + pyruvate = (2S,4S)-4-hydroxy-2,3,4,5-tetrahydrodipicolinate + H2O + H(+). The protein operates within amino-acid biosynthesis; L-lysine biosynthesis via DAP pathway; (S)-tetrahydrodipicolinate from L-aspartate: step 3/4. Functionally, catalyzes the condensation of (S)-aspartate-beta-semialdehyde [(S)-ASA] and pyruvate to 4-hydroxy-tetrahydrodipicolinate (HTPA). The polypeptide is 4-hydroxy-tetrahydrodipicolinate synthase (Mycolicibacterium paratuberculosis (strain ATCC BAA-968 / K-10) (Mycobacterium paratuberculosis)).